The chain runs to 467 residues: Uronate isomerase (467 aa).

Belongs to the metallo-dependent hydrolases superfamily. Uronate isomerase family.

It catalyses the reaction D-glucuronate = D-fructuronate. It carries out the reaction aldehydo-D-galacturonate = keto-D-tagaturonate. Its pathway is carbohydrate metabolism; pentose and glucuronate interconversion. The protein is Uronate isomerase of Geobacillus thermodenitrificans (strain NG80-2).